Consider the following 382-residue polypeptide: MNVTKKTSVMEDFTLFEKMSEHEQVVFCNDPDTGLRAIIAIHDTTLGPALGGCRMYPYGSVEEALEDVLRLSKGMSYKCAAADVDFGGGKAVIIGDPQTDKSPELFRAFGQFVESLGGRFYTGTDMGTTMDDFIHAMKETNSIVGVPEAYGGGGDSSVPTAMGVLYGLKATNYMLFGKEDLANASYAIQGLGKVGYKVAEALLEEGAQLFVTDINQQSLQDIQEKAKSTSGSVTVVESTAIYSQEADIFVPCAFGGVINDETIEQLKVKAIAGSANNQLLTEEHGRQLAKKGILYAPDYIINAGGLIQVADELYGVNKERVLAKTARIYDAILETYKQADLDGITTMEAANRMCEQRIRARGKRNHFYTGSVQPKWNIRRSF.

Position 54 (R54) interacts with NAD(+). L-phenylalanine is bound at residue K78. The active-site Proton donor/acceptor is K90. NAD(+) contacts are provided by residues D125, S156, T160, 190-196 (GLGKVGY), 213-214 (DI), 253-254 (AF), and 274-276 (SAN). N276 is an L-phenylalanine binding site.

The protein belongs to the Glu/Leu/Phe/Val dehydrogenases family.

It catalyses the reaction L-phenylalanine + NAD(+) + H2O = 3-phenylpyruvate + NH4(+) + NADH + H(+). With respect to regulation, activity is not affected by the metal chelating agent EDTA. Addition of 1 mM Mg(2+) results in 15% increase in activity, while the enzyme is strongly inhibited by 1 mM Fe(3+), Fe(2+), Cu(2+), Zn(2+) and Ag(+). Its function is as follows. Catalyzes the reversible NAD(+)-dependent oxidative deamination of L-phenylalanine to phenylpyruvate. Can also catalyze the oxidative deamination of several other amino acids, with much lower efficiency. Shows activity towards various bulky aromatic alpha-keto acids/esters and (S)-amine alcohols. Can catalyze the amination of 3-(2-chlorophenyl)-2-oxopropionic acid (CPOA) to produce 2-chloro-L-phenylalanine (2-Cl-Phe), a chemical compound used in the pharmaceutical and biotechnology industries. Shows a preference for amination over deamination. The chain is Phenylalanine dehydrogenase from Bacillus thermotolerans (Quasibacillus thermotolerans).